The following is a 149-amino-acid chain: Gonadotropin subunit beta-2 (149 aa).

The N-terminal stretch at 1-24 (MARIPECTILLLLCMCVLAVPAQC) is a signal peptide. 6 cysteine pairs are disulfide-bonded: Cys-30–Cys-78, Cys-44–Cys-93, Cys-47–Cys-131, Cys-55–Cys-109, Cys-59–Cys-111, and Cys-114–Cys-121. A glycan (N-linked (GlcNAc...) asparagine) is linked at Asn-34.

Belongs to the glycoprotein hormones subunit beta family. Heterodimer of an alpha and a beta chain.

The protein localises to the secreted. Its function is as follows. Involved in gametogenesis and steroidogenesis. The protein is Gonadotropin subunit beta-2 (cgbb) of Clupea pallasii (Pacific herring).